Here is a 92-residue protein sequence, read N- to C-terminus: CRISPR-associated endoribonuclease Cas2 1 (92 aa).

D10 provides a ligand contact to Mg(2+).

The protein belongs to the CRISPR-associated endoribonuclease Cas2 protein family. Homodimer, forms a heterotetramer with a Cas1 homodimer. It depends on Mg(2+) as a cofactor.

CRISPR (clustered regularly interspaced short palindromic repeat), is an adaptive immune system that provides protection against mobile genetic elements (viruses, transposable elements and conjugative plasmids). CRISPR clusters contain sequences complementary to antecedent mobile elements and target invading nucleic acids. CRISPR clusters are transcribed and processed into CRISPR RNA (crRNA). Functions as a ssRNA-specific endoribonuclease. Involved in the integration of spacer DNA into the CRISPR cassette. The polypeptide is CRISPR-associated endoribonuclease Cas2 1 (Thermodesulfovibrio yellowstonii (strain ATCC 51303 / DSM 11347 / YP87)).